Consider the following 356-residue polypeptide: Trans-enoyl reductase pgmF (356 aa).

NADP(+) is bound by residues 57-60 (VDFK), 175-178 (SGGC), 198-201 (STPN), Tyr216, 261-262 (VG), and 342-343 (AK).

This sequence belongs to the zinc-containing alcohol dehydrogenase family.

FAD-linked oxidoreductase; part of the gene cluster that mediates the biosynthesis of pleosporalin A, ascomycone A, as well as a third cryptic naphthoquinone derived pigment, all responsible for the coloration of conidia. The pathway begins with the biosynthesis of the cyclized heptaketide 3-acetonyl-1,6,8-trihydroxy-2-naphthaldehyde by the NR-PKS pgmA. The C-6 hydroxyl group is further methylated by the O-methyltransferase pgmB to yield fusarubinaldehyde which is in turn oxidized by the cytochrome P450 monooxygenase pgmC at C-9. The C-1 hydroxyl group is then methylated spontaneously. Although pgmE, pgmD and pgmH are essential for the production of pleosporalin A, it is not the case for the 2 other final products and it remains difficult to assign a specific function to each enzyme. PgmF and pgmG seem not to be involved in pigment biosynthesis although they were regulated by the cluster-specific transcription factor pgmR. The polypeptide is Trans-enoyl reductase pgmF (Aspergillus terreus (strain NIH 2624 / FGSC A1156)).